The following is a 407-amino-acid chain: 1-deoxy-D-xylulose 5-phosphate reductoisomerase (407 aa).

Thr-10, Gly-11, Ser-12, Ile-13, Gly-36, and Asn-131 together coordinate NADPH. Lys-132 serves as a coordination point for 1-deoxy-D-xylulose 5-phosphate. Glu-133 is an NADPH binding site. Residue Asp-155 participates in Mn(2+) binding. The 1-deoxy-D-xylulose 5-phosphate site is built by Ser-156, Glu-157, Ser-181, and His-204. Glu-157 contacts Mn(2+). Gly-210 lines the NADPH pocket. Residues Ser-217, Asn-222, Lys-223, and Glu-226 each contribute to the 1-deoxy-D-xylulose 5-phosphate site. Glu-226 is a Mn(2+) binding site.

This sequence belongs to the DXR family. Requires Mg(2+) as cofactor. The cofactor is Mn(2+).

The enzyme catalyses 2-C-methyl-D-erythritol 4-phosphate + NADP(+) = 1-deoxy-D-xylulose 5-phosphate + NADPH + H(+). The protein operates within isoprenoid biosynthesis; isopentenyl diphosphate biosynthesis via DXP pathway; isopentenyl diphosphate from 1-deoxy-D-xylulose 5-phosphate: step 1/6. Functionally, catalyzes the NADPH-dependent rearrangement and reduction of 1-deoxy-D-xylulose-5-phosphate (DXP) to 2-C-methyl-D-erythritol 4-phosphate (MEP). The polypeptide is 1-deoxy-D-xylulose 5-phosphate reductoisomerase (Cutibacterium acnes (strain DSM 16379 / KPA171202) (Propionibacterium acnes)).